The chain runs to 225 residues: Ribonuclease T (225 aa).

Positions 1–21 (MSEDHFDDEHEGHGGGGGSRH) are disordered. The 175-residue stretch at 33 to 207 (VVVDVETGGF…YDTEKTAELF (175 aa)) folds into the Exonuclease domain. Mg(2+) is bound by residues aspartate 36, glutamate 38, histidine 194, and aspartate 199. The Proton donor/acceptor role is filled by histidine 194.

The protein belongs to the RNase T family. As to quaternary structure, homodimer. Mg(2+) is required as a cofactor.

In terms of biological role, trims short 3' overhangs of a variety of RNA species, leaving a one or two nucleotide 3' overhang. Responsible for the end-turnover of tRNA: specifically removes the terminal AMP residue from uncharged tRNA (tRNA-C-C-A). Also appears to be involved in tRNA biosynthesis. The protein is Ribonuclease T of Pseudomonas savastanoi pv. phaseolicola (strain 1448A / Race 6) (Pseudomonas syringae pv. phaseolicola (strain 1448A / Race 6)).